Reading from the N-terminus, the 645-residue chain is Sentrin-specific protease 1 (645 aa).

An interaction with CCAR2 region spans residues 1–200 (MDDIADRMRM…REIYRQLLQM (200 aa)). Phosphoserine occurs at positions 57, 117, and 157. The tract at residues 92 to 117 (QSANGQWRNSTPSSSSSLQKSRNSRS) is disordered. The span at 99–117 (RNSTPSSSSSLQKSRNSRS) shows a compositional bias: low complexity. Positions 171–177 (PKKTQRR) match the Nuclear localization signal motif. The interval 285-313 (KDSGTLHHPHHHHSVPHQPDNLAASNTQS) is disordered. Protease regions lie at residues 451–614 (LTIT…YADC) and 451–615 (LTIT…ADCI). Active-site residues include His534 and Asp551. The Nuclear localization signal motif lies at 575–578 (KKRK). The active-site Nucleophile is the Cys604. Residues 629-635 (PYFRKRM) carry the Nuclear localization signal motif. Residues 636 to 645 (VWEILHRKLL) carry the Nuclear export signal motif.

This sequence belongs to the peptidase C48 family. Interacts with RBM33; promoting ALKBH5 desumoylation and subsequent activation.

The protein resides in the nucleus. It localises to the cytoplasm. Protease that catalyzes two essential functions in the SUMO pathway. The first is the hydrolysis of an alpha-linked peptide bond at the C-terminal end of the small ubiquitin-like modifier (SUMO) propeptides, SUMO1, SUMO2 and SUMO3 leading to the mature form of the proteins. The second is the deconjugation of SUMO1, SUMO2 and SUMO3 from targeted proteins, by cleaving an epsilon-linked peptide bond between the C-terminal glycine of the mature SUMO and the lysine epsilon-amino group of the target protein. Deconjugates SUMO1 from HIPK2. Deconjugates SUMO1 from HDAC1 and BHLHE40/DEC1, which decreases its transcriptional repression activity. Deconjugates SUMO1 from CLOCK, which decreases its transcriptional activation activity. Deconjugates SUMO2 from MTA1. Inhibits N(6)-methyladenosine (m6A) RNA methylation by mediating SUMO1 deconjugation from METTL3 and ALKBH5: METTL3 inhibits the m6A RNA methyltransferase activity, while ALKBH5 desumoylation promotes m6A demethylation. Desumoylates CCAR2 which decreases its interaction with SIRT1. Deconjugates SUMO1 from GPS2. The protein is Sentrin-specific protease 1 (SENP1) of Pongo abelii (Sumatran orangutan).